The following is a 645-amino-acid chain: DNA mismatch repair protein MutL (645 aa).

It belongs to the DNA mismatch repair MutL/HexB family.

In terms of biological role, this protein is involved in the repair of mismatches in DNA. It is required for dam-dependent methyl-directed DNA mismatch repair. May act as a 'molecular matchmaker', a protein that promotes the formation of a stable complex between two or more DNA-binding proteins in an ATP-dependent manner without itself being part of a final effector complex. The protein is DNA mismatch repair protein MutL of Pediococcus pentosaceus (strain ATCC 25745 / CCUG 21536 / LMG 10740 / 183-1w).